The chain runs to 433 residues: Glucose-6-phosphate isomerase (433 aa).

Glutamate 285 functions as the Proton donor in the catalytic mechanism. Residues histidine 306 and lysine 421 contribute to the active site.

This sequence belongs to the GPI family.

The protein resides in the cytoplasm. It carries out the reaction alpha-D-glucose 6-phosphate = beta-D-fructose 6-phosphate. The protein operates within carbohydrate biosynthesis; gluconeogenesis. It functions in the pathway carbohydrate degradation; glycolysis; D-glyceraldehyde 3-phosphate and glycerone phosphate from D-glucose: step 2/4. Its function is as follows. Catalyzes the reversible isomerization of glucose-6-phosphate to fructose-6-phosphate. This is Glucose-6-phosphate isomerase from Mycoplasma mobile (strain ATCC 43663 / 163K / NCTC 11711) (Mesomycoplasma mobile).